We begin with the raw amino-acid sequence, 564 residues long: Agglutinin (564 aa).

Residues 1-24 form the signal peptide; sequence MYAVATWLCFGSTSGWSFTLEDNN. 32-34 provides a ligand contact to beta-D-galactose; sequence IIN. N-linked (GlcNAc...) asparagine glycosylation is present at asparagine 34. Catalysis depends on residues tyrosine 104, tyrosine 147, glutamate 200, and arginine 203. Residues 104 to 105 and 145 to 147 each bind AMP; these read YV and GNY. A glycan (N-linked (GlcNAc...) asparagine) is linked at asparagine 259. Cysteines 282 and 306 form a disulfide. Residues 291–302 constitute a propeptide, linker peptide; sequence SLLIRPVVPNFN. The Ricin B-type lectin 1 domain occupies 309–436; sequence PEPIVRIVGR…YAVSQGWLPT (128 aa). Residues isoleucine 312, 324-328, glutamine 337, lysine 342, and asparagine 348 contribute to the beta-D-galactose site; that span reads DVTGE. The stretch at 319 to 361 is one 1-alpha repeat; that stretch reads NGLCVDVTGEEFFDGNPIQLWPCKSNTDWNQLWTLRKDSTIRS. A disulfide bond links cysteine 322 and cysteine 341. The stretch at 362–402 is one 1-beta repeat; sequence NGKCLTISKSSPRQQVVIYNCSTATVGATRWQIWDNRTIIN. Cysteine 365 and cysteine 382 are oxidised to a cystine. Asparagine 397 and asparagine 437 each carry an N-linked (GlcNAc...) asparagine glycan. The 1-gamma repeat unit spans residues 405-437; it reads SGLVLAATSGNSGTKLTVQTNIYAVSQGWLPTN. Asparagine 437 contacts beta-D-galactose. The Ricin B-type lectin 2 domain maps to 439–563; that stretch reads TQPFVTTIVG…GNLNQIWLPL (125 aa). The stretch at 450-485 is one 2-alpha repeat; sequence YGMCLQANSGKVWLEDCTSEKAEQQWALYADGSIRP. Disulfide bonds link cysteine 453–cysteine 466 and cysteine 492–cysteine 509. A 2-beta repeat occupies 489-528; sequence RDNCLTTDANIKGTVVKILSCGPASSGQRWMFKNDGTILN. The stretch at 531 to 558 is one 2-gamma repeat; that stretch reads NGLVLDVRRSDPSLKQIIVHPFHGNLNQ.

The protein in the N-terminal section; belongs to the ribosome-inactivating protein family. Type 2 RIP subfamily.

The catalysed reaction is Endohydrolysis of the N-glycosidic bond at one specific adenosine on the 28S rRNA.. In Ricinus communis (Castor bean), this protein is Agglutinin.